Here is a 307-residue protein sequence, read N- to C-terminus: uncharacterized protein (307 aa).

A helical transmembrane segment spans residues 12 to 34 (LLAFLLALIMIGSVFAYMLSGGS).

It localises to the membrane. This is an uncharacterized protein from Archaeoglobus fulgidus (strain ATCC 49558 / DSM 4304 / JCM 9628 / NBRC 100126 / VC-16).